Reading from the N-terminus, the 121-residue chain is Mitochondrial intermembrane space cysteine motif-containing protein MIX14 (121 aa).

CHCH domains follow at residues 14–56 and 60–105; these read VANC…VPSV and MSEC…VKNK. 4 short sequence motifs (cx9C motif) span residues 17-27, 38-48, 63-73, and 87-97; these read CPQEFLQYHKC, CKDGRMILSTC, CSEPMKKYDQC, and CLGFLQDLRKC. Disulfide bonds link Cys17–Cys48, Cys27–Cys38, Cys63–Cys97, and Cys73–Cys87.

The protein resides in the mitochondrion intermembrane space. The chain is Mitochondrial intermembrane space cysteine motif-containing protein MIX14 (MIX14) from Saccharomyces cerevisiae (strain ATCC 204508 / S288c) (Baker's yeast).